A 96-amino-acid polypeptide reads, in one-letter code: MSRRCELTGKGPMTGNNVSHANNKTKRRFLPNLNDVTLQSETLGRGVKLRISAAALRSVDHRGGLDAFLAKAKDEELSAAALKVKKEIAKAQAAEA.

Residues 1 to 22 (MSRRCELTGKGPMTGNNVSHAN) are disordered.

It belongs to the bacterial ribosomal protein bL28 family.

The protein is Large ribosomal subunit protein bL28 of Ruegeria sp. (strain TM1040) (Silicibacter sp.).